Reading from the N-terminus, the 192-residue chain is Adenylate kinase (192 aa).

Position 10 to 18 (10 to 18 (GVPGVGGTT)) interacts with ATP.

It belongs to the archaeal adenylate kinase family. Monomer.

The protein resides in the cytoplasm. It carries out the reaction AMP + ATP = 2 ADP. This Methanococcus maripaludis (strain C5 / ATCC BAA-1333) protein is Adenylate kinase.